Reading from the N-terminus, the 171-residue chain is Peptide deformylase (171 aa).

Cys-91 and His-133 together coordinate Fe cation. Residue Glu-134 is part of the active site. Fe cation is bound at residue His-137.

Belongs to the polypeptide deformylase family. It depends on Fe(2+) as a cofactor.

It catalyses the reaction N-terminal N-formyl-L-methionyl-[peptide] + H2O = N-terminal L-methionyl-[peptide] + formate. Removes the formyl group from the N-terminal Met of newly synthesized proteins. Requires at least a dipeptide for an efficient rate of reaction. N-terminal L-methionine is a prerequisite for activity but the enzyme has broad specificity at other positions. This Sodalis glossinidius (strain morsitans) protein is Peptide deformylase.